We begin with the raw amino-acid sequence, 306 residues long: Bifunctional protein FolD 1 (306 aa).

NADP(+) contacts are provided by residues 168–170 (GRS), Ser193, and Ile234.

This sequence belongs to the tetrahydrofolate dehydrogenase/cyclohydrolase family. As to quaternary structure, homodimer.

The enzyme catalyses (6R)-5,10-methylene-5,6,7,8-tetrahydrofolate + NADP(+) = (6R)-5,10-methenyltetrahydrofolate + NADPH. The catalysed reaction is (6R)-5,10-methenyltetrahydrofolate + H2O = (6R)-10-formyltetrahydrofolate + H(+). The protein operates within one-carbon metabolism; tetrahydrofolate interconversion. Catalyzes the oxidation of 5,10-methylenetetrahydrofolate to 5,10-methenyltetrahydrofolate and then the hydrolysis of 5,10-methenyltetrahydrofolate to 10-formyltetrahydrofolate. In Rhizobium meliloti (strain 1021) (Ensifer meliloti), this protein is Bifunctional protein FolD 1.